Here is a 280-residue protein sequence, read N- to C-terminus: DegV domain-containing protein TTE1491 (280 aa).

A DegV domain is found at 4 to 279 (IAIVTDSLSD…PDAAGVFFEE (276 aa)). Hexadecanoate contacts are provided by Thr-61 and Ser-93.

Functionally, may bind long-chain fatty acids, such as palmitate, and may play a role in lipid transport or fatty acid metabolism. This Caldanaerobacter subterraneus subsp. tengcongensis (strain DSM 15242 / JCM 11007 / NBRC 100824 / MB4) (Thermoanaerobacter tengcongensis) protein is DegV domain-containing protein TTE1491.